A 433-amino-acid chain; its full sequence is Enolase (433 aa).

A (2R)-2-phosphoglycerate-binding site is contributed by Gln-167. Glu-209 serves as the catalytic Proton donor. Mg(2+) contacts are provided by Asp-246, Glu-291, and Asp-318. Lys-343, Arg-372, Ser-373, and Lys-394 together coordinate (2R)-2-phosphoglycerate. The active-site Proton acceptor is the Lys-343.

It belongs to the enolase family. Component of the RNA degradosome, a multiprotein complex involved in RNA processing and mRNA degradation. Requires Mg(2+) as cofactor.

The protein resides in the cytoplasm. The protein localises to the secreted. It is found in the cell surface. The catalysed reaction is (2R)-2-phosphoglycerate = phosphoenolpyruvate + H2O. Its pathway is carbohydrate degradation; glycolysis; pyruvate from D-glyceraldehyde 3-phosphate: step 4/5. Functionally, catalyzes the reversible conversion of 2-phosphoglycerate (2-PG) into phosphoenolpyruvate (PEP). It is essential for the degradation of carbohydrates via glycolysis. This chain is Enolase, found in Sodalis glossinidius (strain morsitans).